The sequence spans 1025 residues: Error-prone DNA polymerase (1025 aa).

It belongs to the DNA polymerase type-C family. DnaE2 subfamily.

The protein localises to the cytoplasm. The catalysed reaction is DNA(n) + a 2'-deoxyribonucleoside 5'-triphosphate = DNA(n+1) + diphosphate. Its function is as follows. DNA polymerase involved in damage-induced mutagenesis and translesion synthesis (TLS). It is not the major replicative DNA polymerase. The protein is Error-prone DNA polymerase of Alkalilimnicola ehrlichii (strain ATCC BAA-1101 / DSM 17681 / MLHE-1).